The sequence spans 472 residues: Uronate isomerase (472 aa).

The protein belongs to the metallo-dependent hydrolases superfamily. Uronate isomerase family.

The catalysed reaction is D-glucuronate = D-fructuronate. It catalyses the reaction aldehydo-D-galacturonate = keto-D-tagaturonate. The protein operates within carbohydrate metabolism; pentose and glucuronate interconversion. This Oceanobacillus iheyensis (strain DSM 14371 / CIP 107618 / JCM 11309 / KCTC 3954 / HTE831) protein is Uronate isomerase.